A 204-amino-acid polypeptide reads, in one-letter code: Thymidylate kinase (204 aa).

13 to 20 (GIDGSGKS) is an ATP binding site.

Belongs to the thymidylate kinase family.

It carries out the reaction dTMP + ATP = dTDP + ADP. Phosphorylation of dTMP to form dTDP in both de novo and salvage pathways of dTTP synthesis. The chain is Thymidylate kinase from Leptospira interrogans serogroup Icterohaemorrhagiae serovar copenhageni (strain Fiocruz L1-130).